Here is a 137-residue protein sequence, read N- to C-terminus: Mediator of RNA polymerase II transcription subunit 21 (137 aa).

The tract at residues 37-56 (PKDTIAPSKADQPPEVDTLP) is disordered. Residues 87-130 (GLDNSEQDQLQSIKELEEELNVAEKQRQEAVKEKDEVLVKLDQT) are a coiled coil.

The protein belongs to the Mediator complex subunit 21 family. As to quaternary structure, component of the Mediator complex.

It is found in the nucleus. Its function is as follows. Component of the Mediator complex, a coactivator involved in the regulated transcription of nearly all RNA polymerase II-dependent genes. Mediator functions as a bridge to convey information from gene-specific regulatory proteins to the basal RNA polymerase II transcription machinery. Mediator is recruited to promoters by direct interactions with regulatory proteins and serves as a scaffold for the assembly of a functional preinitiation complex with RNA polymerase II and the general transcription factors. In Neurospora crassa (strain ATCC 24698 / 74-OR23-1A / CBS 708.71 / DSM 1257 / FGSC 987), this protein is Mediator of RNA polymerase II transcription subunit 21 (srb-7).